Reading from the N-terminus, the 225-residue chain is KDP operon transcriptional regulatory protein KdpE (225 aa).

Residues 3–116 (NVLIVEDEQA…ELQARLRVAL (114 aa)) enclose the Response regulatory domain. Aspartate 52 carries the 4-aspartylphosphate modification. Positions 126–225 (DPLVKFSDVT…ETGIGYRFML (100 aa)) form a DNA-binding region, ompR/PhoB-type.

Post-translationally, phosphorylated by KdpD.

It is found in the cytoplasm. Member of the two-component regulatory system KdpD/KdpE involved in the regulation of the kdp operon. This chain is KDP operon transcriptional regulatory protein KdpE (kdpE), found in Escherichia coli (strain K12).